The following is a 212-amino-acid chain: Uracil phosphoribosyltransferase (212 aa).

Residues Arg78, Arg103, and 130–138 each bind 5-phospho-alpha-D-ribose 1-diphosphate; that span reads DPMLATGGS. Residues Ile193 and 198-200 each bind uracil; that span reads GDA. Asp199 contacts 5-phospho-alpha-D-ribose 1-diphosphate.

Belongs to the UPRTase family. The cofactor is Mg(2+).

The enzyme catalyses UMP + diphosphate = 5-phospho-alpha-D-ribose 1-diphosphate + uracil. It functions in the pathway pyrimidine metabolism; UMP biosynthesis via salvage pathway; UMP from uracil: step 1/1. Allosterically activated by GTP. Its function is as follows. Catalyzes the conversion of uracil and 5-phospho-alpha-D-ribose 1-diphosphate (PRPP) to UMP and diphosphate. This is Uracil phosphoribosyltransferase from Pseudomonas entomophila (strain L48).